The chain runs to 355 residues: MEEMDDFTVRRGEREDITGAAGPPEERPLDPAAFEEDDEPTLRPRTLDEFVGQERLKENLRIFVEAAKQRGEPLDHMLLAGPPGLGKTSLCRILAAEMGVQLHPTSGPSLERAGDMAAILTSLEEGDFLFIDEIHRLNRQIEEVLYPAMEDFAIDIVLGQGPSARTIRMDLPRFTLVGATTRTGLMTKPLLDRFGFSARLDYYEPHELEKIVVRNARILGVPITEGGARQLARRSRGTPRVANRLLKRVRDYAQVVGDGTIDEETANAALEMQGVDHLGLDRTDREYLSLIIEKFDGGPVGVGTLSVALGEARDTVEDVYEPYLLQSGLIQRTSRGRVATRHAYAHLGFPVRDGG.

The disordered stretch occupies residues 1–43 (MEEMDDFTVRRGEREDITGAAGPPEERPLDPAAFEEDDEPTLR). The large ATPase domain (RuvB-L) stretch occupies residues 4–203 (MDDFTVRRGE…FGFSARLDYY (200 aa)). The span at 7–17 (FTVRRGEREDI) shows a compositional bias: basic and acidic residues. ATP-binding positions include leucine 42, arginine 43, glycine 84, lysine 87, threonine 88, serine 89, 150–152 (EDF), arginine 193, tyrosine 203, and arginine 240. Threonine 88 contacts Mg(2+). Residues 204–274 (EPHELEKIVV…TANAALEMQG (71 aa)) are small ATPAse domain (RuvB-S). The tract at residues 277–355 (HLGLDRTDRE…HLGFPVRDGG (79 aa)) is head domain (RuvB-H). Positions 313, 332, and 337 each coordinate DNA.

This sequence belongs to the RuvB family. In terms of assembly, homohexamer. Forms an RuvA(8)-RuvB(12)-Holliday junction (HJ) complex. HJ DNA is sandwiched between 2 RuvA tetramers; dsDNA enters through RuvA and exits via RuvB. An RuvB hexamer assembles on each DNA strand where it exits the tetramer. Each RuvB hexamer is contacted by two RuvA subunits (via domain III) on 2 adjacent RuvB subunits; this complex drives branch migration. In the full resolvosome a probable DNA-RuvA(4)-RuvB(12)-RuvC(2) complex forms which resolves the HJ.

It localises to the cytoplasm. It catalyses the reaction ATP + H2O = ADP + phosphate + H(+). In terms of biological role, the RuvA-RuvB-RuvC complex processes Holliday junction (HJ) DNA during genetic recombination and DNA repair, while the RuvA-RuvB complex plays an important role in the rescue of blocked DNA replication forks via replication fork reversal (RFR). RuvA specifically binds to HJ cruciform DNA, conferring on it an open structure. The RuvB hexamer acts as an ATP-dependent pump, pulling dsDNA into and through the RuvAB complex. RuvB forms 2 homohexamers on either side of HJ DNA bound by 1 or 2 RuvA tetramers; 4 subunits per hexamer contact DNA at a time. Coordinated motions by a converter formed by DNA-disengaged RuvB subunits stimulates ATP hydrolysis and nucleotide exchange. Immobilization of the converter enables RuvB to convert the ATP-contained energy into a lever motion, pulling 2 nucleotides of DNA out of the RuvA tetramer per ATP hydrolyzed, thus driving DNA branch migration. The RuvB motors rotate together with the DNA substrate, which together with the progressing nucleotide cycle form the mechanistic basis for DNA recombination by continuous HJ branch migration. Branch migration allows RuvC to scan DNA until it finds its consensus sequence, where it cleaves and resolves cruciform DNA. The polypeptide is Holliday junction branch migration complex subunit RuvB (Rubrobacter xylanophilus (strain DSM 9941 / JCM 11954 / NBRC 16129 / PRD-1)).